Reading from the N-terminus, the 614-residue chain is UvrABC system protein C (614 aa).

Positions 20-98 (TAPGVYRMYA…IKSLSPRYNV (79 aa)) constitute a GIY-YIG domain. The region spanning 207 to 242 (DELTRELGEQMQAASEALEFEQAARLRDLISSLRSM) is the UVR domain.

The protein belongs to the UvrC family. In terms of assembly, interacts with UvrB in an incision complex.

The protein localises to the cytoplasm. Its function is as follows. The UvrABC repair system catalyzes the recognition and processing of DNA lesions. UvrC both incises the 5' and 3' sides of the lesion. The N-terminal half is responsible for the 3' incision and the C-terminal half is responsible for the 5' incision. This Stenotrophomonas maltophilia (strain K279a) protein is UvrABC system protein C.